A 255-amino-acid chain; its full sequence is BTB/POZ domain-containing protein KCTD14 (255 aa).

A disordered region spans residues 1-29; it reads MWQGCAVERPVGRMTSQTPLPQSPRPRRP. Positions 33-130 constitute a BTB domain; it reads TVVELNVGGE…LLEDMPQIFG (98 aa).

The protein is BTB/POZ domain-containing protein KCTD14 (KCTD14) of Homo sapiens (Human).